A 225-amino-acid chain; its full sequence is Ribonuclease T (225 aa).

The disordered stretch occupies residues 1–21; the sequence is MSEDHFDDEHEGHGGGGGSRH. Residues 33-207 form the Exonuclease domain; that stretch reads VVVDVETGGF…YDTEKTAELF (175 aa). Mg(2+) is bound by residues Asp-36, Glu-38, His-194, and Asp-199. Catalysis depends on His-194, which acts as the Proton donor/acceptor.

Belongs to the RNase T family. As to quaternary structure, homodimer. It depends on Mg(2+) as a cofactor.

Its function is as follows. Trims short 3' overhangs of a variety of RNA species, leaving a one or two nucleotide 3' overhang. Responsible for the end-turnover of tRNA: specifically removes the terminal AMP residue from uncharged tRNA (tRNA-C-C-A). Also appears to be involved in tRNA biosynthesis. The polypeptide is Ribonuclease T (Pseudomonas savastanoi pv. phaseolicola (strain 1448A / Race 6) (Pseudomonas syringae pv. phaseolicola (strain 1448A / Race 6))).